Here is a 169-residue protein sequence, read N- to C-terminus: Probable glutathione peroxidase 2 (169 aa).

Cysteine 41 is a catalytic residue.

It belongs to the glutathione peroxidase family. In terms of assembly, interacts with DJ1A. In terms of tissue distribution, expressed in leaves, stems, flowers, green siliques and roots.

Its subcellular location is the cytoplasm. The protein resides in the cytosol. It is found in the nucleus. The enzyme catalyses 2 glutathione + H2O2 = glutathione disulfide + 2 H2O. In terms of biological role, may constitute a glutathione peroxidase-like protective system against oxidative stresses. This Arabidopsis thaliana (Mouse-ear cress) protein is Probable glutathione peroxidase 2 (GPX2).